The following is a 1050-amino-acid chain: ATP-dependent DNA helicase MPH1 (1050 aa).

A Helicase ATP-binding domain is found at 95-262; sequence IVQRAFYHNL…EIIDNLNISK (168 aa). 108–115 serves as a coordination point for ATP; sequence LPTGLGKT. Positions 210 to 213 match the DEAH box motif; the sequence is DEAH. The Helicase C-terminal domain maps to 431 to 631; that stretch reads KIEAMMEELD…LIDLKEQNRM (201 aa). Disordered regions lie at residues 493–524 and 743–821; these read DESN…AQIN and DSDE…PPKR. The span at 499 to 508 shows a compositional bias: basic residues; it reads KKSKGKRVGK. Positions 786–799 are enriched in basic and acidic residues; the sequence is RTLDQHHSASEERG. The span at 800-810 shows a compositional bias: polar residues; that stretch reads INSNFSHESNL.

It belongs to the DEAD box helicase family. DEAH subfamily. FANCM sub-subfamily. In terms of assembly, interacts with the MHF histone-fold complex to form the FANCM-MHF complex.

Its subcellular location is the nucleus. The catalysed reaction is ATP + H2O = ADP + phosphate + H(+). ATP-dependent DNA helicase involved in DNA damage repair by homologous recombination and in genome maintenance. Capable of unwinding D-loops. Plays a role in limiting crossover recombinants during mitotic DNA double-strand break (DSB) repair. Component of a FANCM-MHF complex which promotes gene conversion at blocked replication forks, probably by reversal of the stalled fork. The polypeptide is ATP-dependent DNA helicase MPH1 (Scheffersomyces stipitis (strain ATCC 58785 / CBS 6054 / NBRC 10063 / NRRL Y-11545) (Yeast)).